The chain runs to 462 residues: MSKMWSGRFNANASTLLDQFNASLPFDKELYLQDIQGSIAHATMLAKQGILSQEEAESIIHGLKTVKEKIENGQFEWNIEDEDIHMAIEKALTNLIGDAGKKLHTARSRNDQVALDFRLYVQQSNKDLIRLLANLMQTLINIAKNHTQTLIPGMTHLQHAQPISFAYHLLAYASMFKRDIERFQSSFERNNYSPIGCAALAGTPHPIDREMTAQELGFDAPTINCLDTVSDRDFALEILFNIATMFMHISRLSEELILWSSYEFGFVTLSDEYSTGSSIMPQKKNPDVPELLRGKTGRAYGNLMALLTVMKGLPLAYNKDMQEDKEGVFDSVKNAKISLEILNETLKTMNINKEKMEAATKIGHLTATDLADYLVEKIGIPFREAHFITGKAVALAEQKQKDLSELSLAELQSIDPRIQNDVLQYLDLQHSMNARNSYGGTAKEQVEKQIEYFERFLEELEG.

This sequence belongs to the lyase 1 family. Argininosuccinate lyase subfamily.

It localises to the cytoplasm. It catalyses the reaction 2-(N(omega)-L-arginino)succinate = fumarate + L-arginine. It participates in amino-acid biosynthesis; L-arginine biosynthesis; L-arginine from L-ornithine and carbamoyl phosphate: step 3/3. This chain is Argininosuccinate lyase, found in Nitratiruptor sp. (strain SB155-2).